Here is a 196-residue protein sequence, read N- to C-terminus: Pyridoxal 5'-phosphate synthase subunit PdxT (196 aa).

G46–S48 is an L-glutamine binding site. C78 acts as the Nucleophile in catalysis. Residues R105 and I134–R135 each bind L-glutamine. Residues H170 and E172 each act as charge relay system in the active site.

It belongs to the glutaminase PdxT/SNO family. In terms of assembly, in the presence of PdxS, forms a dodecamer of heterodimers. Only shows activity in the heterodimer.

It carries out the reaction aldehydo-D-ribose 5-phosphate + D-glyceraldehyde 3-phosphate + L-glutamine = pyridoxal 5'-phosphate + L-glutamate + phosphate + 3 H2O + H(+). It catalyses the reaction L-glutamine + H2O = L-glutamate + NH4(+). Its pathway is cofactor biosynthesis; pyridoxal 5'-phosphate biosynthesis. Catalyzes the hydrolysis of glutamine to glutamate and ammonia as part of the biosynthesis of pyridoxal 5'-phosphate. The resulting ammonia molecule is channeled to the active site of PdxS. The chain is Pyridoxal 5'-phosphate synthase subunit PdxT from Pelotomaculum thermopropionicum (strain DSM 13744 / JCM 10971 / SI).